The sequence spans 208 residues: MVSRRVQALLEQLRAQGIRDEQVLDALAAVPREKFIDEAFEHKAWENIALPIGQGQTISQPYMVARMTELLELTPQSRVLEIGTGSGYQTAILAHLVHHVCSVERIKGLQWQARRRLKQLDLHNVSTRHGDGWQGWQARAPFDAIIVTAAPPEIPTALMAQLDEGGILVLPVGDEQQFLKRVRRRGGEFIIDTVEAVRFVPLVRGELA.

S59 is a catalytic residue.

Belongs to the methyltransferase superfamily. L-isoaspartyl/D-aspartyl protein methyltransferase family.

It localises to the cytoplasm. It carries out the reaction [protein]-L-isoaspartate + S-adenosyl-L-methionine = [protein]-L-isoaspartate alpha-methyl ester + S-adenosyl-L-homocysteine. Catalyzes the methyl esterification of L-isoaspartyl residues in peptides and proteins that result from spontaneous decomposition of normal L-aspartyl and L-asparaginyl residues. It plays a role in the repair and/or degradation of damaged proteins. The protein is Protein-L-isoaspartate O-methyltransferase of Salmonella arizonae (strain ATCC BAA-731 / CDC346-86 / RSK2980).